The following is a 477-amino-acid chain: Glutamate--tRNA ligase 1 (477 aa).

Positions 12 to 22 (PSPTGALHLGN) match the 'HIGH' region motif. The 'KMSKS' region motif lies at 253–257 (PLSKR). Lys-256 is a binding site for ATP.

It belongs to the class-I aminoacyl-tRNA synthetase family. Glutamate--tRNA ligase type 1 subfamily. Monomer.

The protein resides in the cytoplasm. It carries out the reaction tRNA(Glu) + L-glutamate + ATP = L-glutamyl-tRNA(Glu) + AMP + diphosphate. Catalyzes the attachment of glutamate to tRNA(Glu) in a two-step reaction: glutamate is first activated by ATP to form Glu-AMP and then transferred to the acceptor end of tRNA(Glu). The protein is Glutamate--tRNA ligase 1 of Halorhodospira halophila (strain DSM 244 / SL1) (Ectothiorhodospira halophila (strain DSM 244 / SL1)).